A 76-amino-acid chain; its full sequence is MSCYSSILNSISTLAFLQVASNVIELVRHCIMHFCETRIRCNTLAFVILKILITMVIYFMIGLGLFYLAKNGTEAE.

The signal sequence occupies residues 1–21 (MSCYSSILNSISTLAFLQVAS). Over 23–45 (VIELVRHCIMHFCETRIRCNTLA) the chain is Intravirion. The helical transmembrane segment at 46–66 (FVILKILITMVIYFMIGLGLF) threads the bilayer. Over 67-76 (YLAKNGTEAE) the chain is Virion surface. Residue Asn-71 is glycosylated (N-linked (GlcNAc...) asparagine; by host).

Belongs to the chordopoxvirinae A9 family.

The protein resides in the virion membrane. It is found in the host cytoplasm. Envelope protein. Required for an early step in virion morphogenesis. The protein is Protein A9 homolog of Fowlpox virus (strain NVSL) (FPV).